The primary structure comprises 2939 residues: Serine/threonine-protein kinase tel1 (2939 aa).

3 disordered regions span residues 193–212, 695–718, and 859–886; these read GTSVRASPAPGTPATSRAGS, PPEDSHKATSTDQPKREEIRAADS, and KTRRESPTDSDPASMDLDDEFDSQETRK. Basic and acidic residues predominate over residues 697–715; the sequence is EDSHKATSTDQPKREEIRA. The FAT domain maps to 1869–2471; that stretch reads IAAAAATRCG…MYQIWSGVKA (603 aa). In terms of domain architecture, PI3K/PI4K catalytic spans 2577–2890; that stretch reads FEPQMSIASG…DKKSTKNLNE (314 aa). Positions 2583–2589 are G-loop; it reads IASGVSA. The interval 2755 to 2763 is catalytic loop; sequence GLGDRHGHN. The activation loop stretch occupies residues 2775–2799; sequence HIDLGVAFELGRILPVPELVPFRLT. Residues 2869–2894 form a disordered region; that stretch reads DVVEAEDERRAGDKKSTKNLNEPSEA. Positions 2875–2884 are enriched in basic and acidic residues; that stretch reads DERRAGDKKS. In terms of domain architecture, FATC spans 2907–2939; sequence KTLSVMATVNDLINQATDERNLAVLFCGWAAYA.

The protein belongs to the PI3/PI4-kinase family. ATM subfamily. In terms of assembly, associates with DNA double-strand breaks.

Its subcellular location is the nucleus. The protein resides in the chromosome. The protein localises to the telomere. It catalyses the reaction L-seryl-[protein] + ATP = O-phospho-L-seryl-[protein] + ADP + H(+). The catalysed reaction is L-threonyl-[protein] + ATP = O-phospho-L-threonyl-[protein] + ADP + H(+). Serine/threonine protein kinase which activates checkpoint signaling upon genotoxic stresses such as ionizing radiation (IR), ultraviolet light (UV), or DNA replication stalling, thereby acting as a DNA damage sensor. Recognizes the substrate consensus sequence [ST]-Q. Phosphorylates histone H2A to form H2AS128ph (gamma-H2A) at sites of DNA damage, involved in the regulation of DNA damage response mechanism. Required for the control of telomere length and genome stability. This is Serine/threonine-protein kinase tel1 (mus-21) from Neurospora crassa (strain ATCC 24698 / 74-OR23-1A / CBS 708.71 / DSM 1257 / FGSC 987).